The chain runs to 448 residues: Homogentisate 1,2-dioxygenase (448 aa).

The Fe cation site is built by His340, Glu346, and His377.

It belongs to the homogentisate dioxygenase family. Requires Fe cation as cofactor.

It carries out the reaction homogentisate + O2 = 4-maleylacetoacetate + H(+). Its pathway is amino-acid degradation; L-phenylalanine degradation; acetoacetate and fumarate from L-phenylalanine: step 4/6. The chain is Homogentisate 1,2-dioxygenase (hmgA) from Emericella nidulans (strain FGSC A4 / ATCC 38163 / CBS 112.46 / NRRL 194 / M139) (Aspergillus nidulans).